The sequence spans 41 residues: Large ribosomal subunit protein bL36 (41 aa).

The protein belongs to the bacterial ribosomal protein bL36 family.

The chain is Large ribosomal subunit protein bL36 from Xanthobacter autotrophicus (strain ATCC BAA-1158 / Py2).